Consider the following 346-residue polypeptide: KH domain-containing, RNA-binding, signal transduction-associated protein 3 (346 aa).

The interval 1-160 (MEEKYLPELM…IKKFLIPDYN (160 aa)) is involved in homodimerization. K4 is covalently cross-linked (Glycyl lysine isopeptide (Lys-Gly) (interchain with G-Cter in SUMO2)). One can recognise a KH domain in the interval 61-127 (LIPVKQFPKF…AKYFHLNDDL (67 aa)). Residues 212 to 251 (RPVGVVVPRGTPTPRGVLSTRGPVSRGRGLLTPRARGVPP) form an interaction with SIAH1 region. A compositionally biased stretch (low complexity) spans 213–228 (PVGVVVPRGTPTPRGV). Disordered regions lie at residues 213–267 (PVGV…ETYG) and 318–346 (QEEW…YGRY). Residues 253-262 (GYRPPPPPPT) show a composition bias toward pro residues.

It belongs to the KHDRBS family. Self-associates to form homooligomers; dimerization increases RNA affinity. Interacts with KHDRBS2/SLM-1. Interacts with KHDRBS1/SAM68; heterooligomer formation of KHDRBS family proteins may modulate RNA substrate specificity. Interacts with the splicing regulatory proteins SFRS9, SAFB and YTHDC1. Interacts with HNRPL. Interacts with RBMX, RBMY1A1, p85 subunit of PI3-kinase, SERPINB5. Interacts with SIAH1 which promotes targeting for degradation. In terms of processing, phosphorylated on tyrosine residues. Isoform 1 C-terminal region is tyrosine-rich, but isoform 2 lacking this C-terminal region is also tyrosine-phosphorylated. In terms of tissue distribution, ubiquitous with higher expression in testis, skeletal muscle and brain. Expressed in the kidney only in podocytes, the glomerular epithelial cells of the kidney. Strongly expressed after meiosis.

It is found in the nucleus. Its function is as follows. RNA-binding protein that plays a role in the regulation of alternative splicing and influences mRNA splice site selection and exon inclusion. Binds preferentially to the 5'-[AU]UAAA-3' motif in vitro. Binds optimally to RNA containing 5'-[AU]UAA-3' as a bipartite motif spaced by more than 15 nucleotides. Binds poly(A). RNA-binding abilities are down-regulated by tyrosine kinase PTK6. Involved in splice site selection of vascular endothelial growth factor. In vitro regulates CD44 alternative splicing by direct binding to purine-rich exonic enhancer. Can regulate alternative splicing of neurexins NRXN1-3 in the laminin G-like domain 6 containing the evolutionary conserved neurexin alternative spliced segment 4 (AS4) involved in neurexin selective targeting to postsynaptic partners such as neuroligins and LRRTM family members. Targeted, cell-type specific splicing regulation of NRXN1 at AS4 is involved in neuronal glutamatergic synapse function and plasticity. May regulate expression of KHDRBS2/SLIM-1 in defined brain neuron populations by modifying its alternative splicing. Can bind FABP9 mRNA. May play a role as a negative regulator of cell growth. Inhibits cell proliferation. Functionally, (Microbial infection) Involved in post-transcriptional regulation of HIV-1 gene expression. The polypeptide is KH domain-containing, RNA-binding, signal transduction-associated protein 3 (KHDRBS3) (Homo sapiens (Human)).